The primary structure comprises 415 residues: L-cysteine:1D-myo-inositol 2-amino-2-deoxy-alpha-D-glucopyranoside ligase 2 (415 aa).

Residue cysteine 44 participates in Zn(2+) binding. Residues 44–47, threonine 59, and 82–84 contribute to the L-cysteinyl-5'-AMP site; these read CGIT and NIT. Residues 46–56 carry the 'HIGH' region motif; that stretch reads ITPYDSTHLGH. Residues 188–193 carry the 'ERGGDP' region motif; it reads ERGGDP. Tryptophan 228 provides a ligand contact to L-cysteinyl-5'-AMP. A Zn(2+)-binding site is contributed by cysteine 232. 250–252 is a binding site for L-cysteinyl-5'-AMP; it reads GSD. Residue histidine 257 participates in Zn(2+) binding. Isoleucine 284 contacts L-cysteinyl-5'-AMP. The 'KMSKS' region motif lies at 290 to 294; that stretch reads KMSKS.

The protein belongs to the class-I aminoacyl-tRNA synthetase family. MshC subfamily. Monomer. It depends on Zn(2+) as a cofactor.

It catalyses the reaction 1D-myo-inositol 2-amino-2-deoxy-alpha-D-glucopyranoside + L-cysteine + ATP = 1D-myo-inositol 2-(L-cysteinylamino)-2-deoxy-alpha-D-glucopyranoside + AMP + diphosphate + H(+). Functionally, catalyzes the ATP-dependent condensation of GlcN-Ins and L-cysteine to form L-Cys-GlcN-Ins. This is L-cysteine:1D-myo-inositol 2-amino-2-deoxy-alpha-D-glucopyranoside ligase 2 from Corynebacterium jeikeium (strain K411).